Reading from the N-terminus, the 125-residue chain is Fluoride-specific ion channel FluC (125 aa).

4 helical membrane passes run 7–27 (FFIV…MAVV), 36–56 (GFPY…GFLS), 63–83 (PYGR…FSTF), and 96–116 (FIFA…GVFC). Residues Gly-75 and Thr-78 each coordinate Na(+).

It belongs to the fluoride channel Fluc/FEX (TC 1.A.43) family.

It localises to the cell inner membrane. The enzyme catalyses fluoride(in) = fluoride(out). With respect to regulation, na(+) is not transported, but it plays an essential structural role and its presence is essential for fluoride channel function. Functionally, fluoride-specific ion channel. Important for reducing fluoride concentration in the cell, thus reducing its toxicity. In Elusimicrobium minutum (strain Pei191), this protein is Fluoride-specific ion channel FluC.